The following is a 293-amino-acid chain: Ribosomal protein L11 methyltransferase (293 aa).

Threonine 145, glycine 166, aspartate 188, and asparagine 230 together coordinate S-adenosyl-L-methionine.

It belongs to the methyltransferase superfamily. PrmA family.

The protein resides in the cytoplasm. The catalysed reaction is L-lysyl-[protein] + 3 S-adenosyl-L-methionine = N(6),N(6),N(6)-trimethyl-L-lysyl-[protein] + 3 S-adenosyl-L-homocysteine + 3 H(+). Functionally, methylates ribosomal protein L11. This Salmonella newport (strain SL254) protein is Ribosomal protein L11 methyltransferase.